The sequence spans 160 residues: Transcriptional repressor NrdR (160 aa).

A compositionally biased stretch (polar residues) spans 1–11 (MRCPSCNSLDT). The segment at 1–20 (MRCPSCNSLDTQVKDSRPTE) is disordered. Residues 3–34 (CPSCNSLDTQVKDSRPTEDSAVIRRRRVCMAC) fold into a zinc finger. Residues 49–139 (LTVIKRNGRR…VYRNFREAKD (91 aa)) form the ATP-cone domain.

The protein belongs to the NrdR family. The cofactor is Zn(2+).

Its function is as follows. Negatively regulates transcription of bacterial ribonucleotide reductase nrd genes and operons by binding to NrdR-boxes. The polypeptide is Transcriptional repressor NrdR (Nitrobacter hamburgensis (strain DSM 10229 / NCIMB 13809 / X14)).